Consider the following 256-residue polypeptide: Pyridoxine 5'-phosphate synthase (256 aa).

3-amino-2-oxopropyl phosphate is bound by residues asparagine 8 and arginine 19. Histidine 44 (proton acceptor) is an active-site residue. The 1-deoxy-D-xylulose 5-phosphate site is built by arginine 46 and histidine 51. Glutamate 74 (proton acceptor) is an active-site residue. Threonine 111 serves as a coordination point for 1-deoxy-D-xylulose 5-phosphate. Residue histidine 202 is the Proton donor of the active site. Residues aspartate 203 and 225–226 (GH) contribute to the 3-amino-2-oxopropyl phosphate site.

It belongs to the PNP synthase family. Homooctamer; tetramer of dimers.

It is found in the cytoplasm. It carries out the reaction 3-amino-2-oxopropyl phosphate + 1-deoxy-D-xylulose 5-phosphate = pyridoxine 5'-phosphate + phosphate + 2 H2O + H(+). It participates in cofactor biosynthesis; pyridoxine 5'-phosphate biosynthesis; pyridoxine 5'-phosphate from D-erythrose 4-phosphate: step 5/5. Catalyzes the complicated ring closure reaction between the two acyclic compounds 1-deoxy-D-xylulose-5-phosphate (DXP) and 3-amino-2-oxopropyl phosphate (1-amino-acetone-3-phosphate or AAP) to form pyridoxine 5'-phosphate (PNP) and inorganic phosphate. In Xanthomonas campestris pv. campestris (strain 8004), this protein is Pyridoxine 5'-phosphate synthase.